The sequence spans 159 residues: Cyanate hydratase (159 aa).

Active-site residues include arginine 103, glutamate 106, and serine 129.

The protein belongs to the cyanase family.

It catalyses the reaction cyanate + hydrogencarbonate + 3 H(+) = NH4(+) + 2 CO2. Catalyzes the reaction of cyanate with bicarbonate to produce ammonia and carbon dioxide. The protein is Cyanate hydratase of Blastomyces gilchristii (strain SLH14081) (Blastomyces dermatitidis).